Here is a 366-residue protein sequence, read N- to C-terminus: Mitochondrial division protein fszB (366 aa).

Residues 70–74 (GGGGN), 157–159 (GTG), Glu190, and Asp238 contribute to the GTP site.

Belongs to the FtsZ family.

The protein localises to the mitochondrion. Functionally, probably involved in mitochondrion division process. Binds to and hydrolyzes GTP. This is Mitochondrial division protein fszB (fszB) from Dictyostelium discoideum (Social amoeba).